A 287-amino-acid polypeptide reads, in one-letter code: Stomatin-like protein 3 (287 aa).

Position 3 is a phosphoserine (S3). A helical; Signal-anchor for type III membrane protein transmembrane segment spans residues 25 to 45 (WILFFLSFLLMLVTFPISVWM). Topologically, residues 46 to 287 (CLKIIKEYER…GNNKKVTAKA (242 aa)) are cytoplasmic. Position 237 is a phosphoserine (S237).

Belongs to the band 7/mec-2 family. Homodimer. Interacts with PIEZO1 and PIEZO2. As to expression, expressed by all dorsal root ganglion neurons and is selectively expressed in neuronal tissues. Detected in olfactory epithelium.

It is found in the cell membrane. Required for the function of many mechanoreceptors. Modulate mechanotransduction channels and acid-sensing ion channels (ASIC) proteins. Potentiates PIEZO1 and PIEZO2 function by increasing their sensitivity to mechanical stimulations. This is Stomatin-like protein 3 (Stoml3) from Mus musculus (Mouse).